Here is a 309-residue protein sequence, read N- to C-terminus: Probable manganese-dependent inorganic pyrophosphatase (309 aa).

Mn(2+) is bound by residues His9, Asp13, Asp15, Asp75, His97, and Asp149.

The protein belongs to the PPase class C family. Requires Mn(2+) as cofactor.

Its subcellular location is the cytoplasm. It carries out the reaction diphosphate + H2O = 2 phosphate + H(+). This chain is Probable manganese-dependent inorganic pyrophosphatase, found in Staphylococcus saprophyticus subsp. saprophyticus (strain ATCC 15305 / DSM 20229 / NCIMB 8711 / NCTC 7292 / S-41).